A 255-amino-acid polypeptide reads, in one-letter code: Ribosomal RNA small subunit methyltransferase G (255 aa).

A disordered region spans residues 1–44; the sequence is MSSPGRPKGEYRSAQHAGAVAGPPGRPDGEHRGSSGADPNGRLR. S-adenosyl-L-methionine contacts are provided by residues glycine 118, leucine 123, 169-170, and arginine 183; that span reads VE.

This sequence belongs to the methyltransferase superfamily. RNA methyltransferase RsmG family.

Its subcellular location is the cytoplasm. It catalyses the reaction guanosine(527) in 16S rRNA + S-adenosyl-L-methionine = N(7)-methylguanosine(527) in 16S rRNA + S-adenosyl-L-homocysteine. Functionally, specifically methylates the N7 position of guanine in position 527 of 16S rRNA. The polypeptide is Ribosomal RNA small subunit methyltransferase G (Bordetella petrii (strain ATCC BAA-461 / DSM 12804 / CCUG 43448)).